The primary structure comprises 170 residues: Large ribosomal subunit protein uL10 (170 aa).

The protein belongs to the universal ribosomal protein uL10 family. In terms of assembly, part of the ribosomal stalk of the 50S ribosomal subunit. The N-terminus interacts with L11 and the large rRNA to form the base of the stalk. The C-terminus forms an elongated spine to which L12 dimers bind in a sequential fashion forming a multimeric L10(L12)X complex.

In terms of biological role, forms part of the ribosomal stalk, playing a central role in the interaction of the ribosome with GTP-bound translation factors. This is Large ribosomal subunit protein uL10 from Chlamydia felis (strain Fe/C-56) (Chlamydophila felis).